A 156-amino-acid polypeptide reads, in one-letter code: Small ribosomal subunit protein uS7 (156 aa).

It belongs to the universal ribosomal protein uS7 family. Part of the 30S ribosomal subunit. Contacts proteins S9 and S11.

Its function is as follows. One of the primary rRNA binding proteins, it binds directly to 16S rRNA where it nucleates assembly of the head domain of the 30S subunit. Is located at the subunit interface close to the decoding center, probably blocks exit of the E-site tRNA. This is Small ribosomal subunit protein uS7 from Campylobacter concisus (strain 13826).